The primary structure comprises 86 residues: Progonadoliberin-2 (86 aa).

A signal peptide spans 1 to 24 (MVSVARLVFMLGPLLCLGAQLSSS). Glutamine 25 is modified (pyrrolidone carboxylic acid). Glycine 34 carries the post-translational modification Glycine amide.

Belongs to the GnRH family.

Its subcellular location is the secreted. Stimulates the secretion of gonadotropins. The polypeptide is Progonadoliberin-2 (gnrh2) (Oncorhynchus mykiss (Rainbow trout)).